Here is a 105-residue protein sequence, read N- to C-terminus: Large ribosomal subunit protein uL24 (105 aa).

This sequence belongs to the universal ribosomal protein uL24 family. In terms of assembly, part of the 50S ribosomal subunit.

Functionally, one of two assembly initiator proteins, it binds directly to the 5'-end of the 23S rRNA, where it nucleates assembly of the 50S subunit. One of the proteins that surrounds the polypeptide exit tunnel on the outside of the subunit. This Francisella tularensis subsp. novicida (strain U112) protein is Large ribosomal subunit protein uL24.